A 792-amino-acid polypeptide reads, in one-letter code: Phosphatidylinositol 4-phosphate 5-kinase type-1 sktl (792 aa).

Over residues 1 to 21 (MDTRVELELEPVGKQDRLKDQ) the composition is skewed to basic and acidic residues. Disordered regions lie at residues 1–74 (MDTR…QPGT), 105–139 (TQTPASKLRSASSTLDASISRNPSTTGGKHEKKLG), 423–446 (AKLQRKESAAQGPPSLNPDDDAPE), 577–612 (TPTFPLKHSPSKRKTSTTQLRSPASRLPPLSTPTNA), and 640–714 (AAST…TDLS). Polar residues-rich tracts occupy residues 52–62 (QTASPDQEATP) and 105–131 (TQTPASKLRSASSTLDASISRNPSTTG). A PIPK domain is found at 155 to 573 (QSKQIMGSIQ…RFQDAMGKQV (419 aa)). The span at 642–658 (STSSLQQQRSSNQSNNN) shows a compositional bias: low complexity. Over residues 678-702 (EPSSTYHTQYSYDSSGRTGSALTSD) the composition is skewed to polar residues.

In terms of assembly, interacts with ash2 (via B30.2/SPRY domain); the interaction is direct and seems to be specific for ash2 isoform B.

It is found in the cytoplasm. The protein resides in the cell cortex. Its subcellular location is the nucleus. It localises to the chromosome. The protein localises to the apical cell membrane. It is found in the cell projection. The protein resides in the cilium. Its subcellular location is the flagellum membrane. It catalyses the reaction a 1,2-diacyl-sn-glycero-3-phospho-(1D-myo-inositol 4-phosphate) + ATP = a 1,2-diacyl-sn-glycero-3-phospho-(1D-myo-inositol-4,5-bisphosphate) + ADP + H(+). Functionally, catalyzes the phosphorylation of phosphatidylinositol 4-phosphate (PtdIns[4]P) to form phosphatidylinositol 4,5-bisphosphate (PtdIns[4,5]P(2)), a lipid second messenger that regulates several cellular processes such as signal transduction, vesicle trafficking, actin cytoskeleton dynamics, cell adhesion, and cell motility. PtdIns[4,5]P(2) can directly act as a second messenger or can be utilized as a precursor to generate other second messengers: inositol 1,4,5-trisphosphate (IP3), diacylglycerol (DAG) or phosphatidylinositol-3,4,5-trisphosphate (PtdIns[3,4,5]P(3)). Required for germline development during oogenesis. Sktl is the major phosphatidylinositol 4-phosphate 5-kinase responsible for enrichment of PtdIns[4,5]P(2) in the apical plasma membrane of the oocyte and follicular epithelium cells of the egg chamber during oogenesis. Involved in nuclear anchoring and microtubule organization required for targeted mRNA transport during maintenance of oocyte polarity. The PtdIns[4,5]P(2) produced by sktl is required for maintenance of cellular polarity, prevention of the epithelial-mesenchymal transition process, maintenance of adherens junctions and regulation of apical constriction, probably by affecting polarized cortical recruitment of PAR proteins and their effectors, including baz/bazooka, aPKC, par-1 and l(2)gl. Involved in actin cytoskeleton organization probably through PtdIns[4,5]P(2)-mediated regulation of Moe/Moesin phosphorylation. Involved in PtdIns[4,5]P(2)-mediated apical recruitment of the formin dia/diaphanous in tubular epithelial cells. Involved in anterodorsal cell morphogenesis and eggshell dorsal appendage formation, probably through regulation of apical constriction by PtdIns[4,5]P(2) during tubulogenesis. Required for cell viability or proliferation during wing and eye imaginal disk development. May be involved in cytoskeletal regulation during sensory bristle development. Together with mys/integrin beta localizes to the trailing edge of larval epidermal cells in a JNK signaling-dependent manner during wound healing and is required for setting up cell polarity and re-epithelialization. Required for polarization of elongating spermatid cysts possibly by generation of PtdIns[4,5]P(2) involved in mediating membrane association and orientation of the nucleus-basal body pair. Probably involved in PtdIns[4,5]P(2)-mediated recruitment of exocyst proteins that may mediate membrane addition during spermatid elongation. Involved in maintenance of specialised cell contacts known as slit diaphragms required for nephrocyte morphogenesis and function. Regulates nephrocyte endocytosis, possibly through PtdIns[4,5]P(2)-mediated recruitment of effector proteins. Not required for nervous system development or neurotransmitter release at the neuromuscular junction. Together with ash2 probably plays a role in maintenance of transcriptionally active chromatin through down-regulation of histone H1 hyperphosphorylation. The polypeptide is Phosphatidylinositol 4-phosphate 5-kinase type-1 sktl (Drosophila melanogaster (Fruit fly)).